The following is a 70-amino-acid chain: Large ribosomal subunit protein eL24 (70 aa).

Zn(2+) is bound by residues C7, C10, C33, and C37. Residues C7–C37 form a C4-type zinc finger.

It belongs to the eukaryotic ribosomal protein eL24 family. Part of the 50S ribosomal subunit. Forms a cluster with proteins L3 and L14. Zn(2+) serves as cofactor.

Functionally, binds to the 23S rRNA. The sequence is that of Large ribosomal subunit protein eL24 from Methanocaldococcus jannaschii (strain ATCC 43067 / DSM 2661 / JAL-1 / JCM 10045 / NBRC 100440) (Methanococcus jannaschii).